Consider the following 819-residue polypeptide: Eukaryotic translation initiation factor 3 subunit C (819 aa).

The disordered stretch occupies residues 1–106 (MSRFFLKTYE…DSSDEEDGKK (106 aa)). Composition is skewed to acidic residues over residues 17–41 (GEEE…ELSD) and 47–59 (DSDE…EDND). Residues 620–795 (FHQHINLDLI…EYIIFERGEE (176 aa)) form the PCI domain.

This sequence belongs to the eIF-3 subunit C family. In terms of assembly, component of the eukaryotic translation initiation factor 3 (eIF-3) complex.

Its subcellular location is the cytoplasm. Its function is as follows. Component of the eukaryotic translation initiation factor 3 (eIF-3) complex, which is involved in protein synthesis of a specialized repertoire of mRNAs and, together with other initiation factors, stimulates binding of mRNA and methionyl-tRNAi to the 40S ribosome. The eIF-3 complex specifically targets and initiates translation of a subset of mRNAs involved in cell proliferation. In Kluyveromyces lactis (strain ATCC 8585 / CBS 2359 / DSM 70799 / NBRC 1267 / NRRL Y-1140 / WM37) (Yeast), this protein is Eukaryotic translation initiation factor 3 subunit C.